A 237-amino-acid polypeptide reads, in one-letter code: Cytosolic-abundant heat soluble protein 1 (237 aa).

2 stretches are compositionally biased toward basic and acidic residues: residues Met-1–Gln-17 and Val-91–Arg-105. Disordered regions lie at residues Met-1–Glu-35 and Ser-85–Arg-105. Positions Lys-98–Ala-201 form a coiled coil. CAHS motif regions lie at residues Tyr-132 to Gln-150 and Gln-169 to Glu-187. The segment at Ala-212–His-237 is disordered. A compositionally biased stretch (basic and acidic residues) spans Asp-226–His-237.

Belongs to the Cytosolic-abundant heat soluble protein (CAHS) family.

The protein localises to the cytoplasm. Its subcellular location is the nucleus. Its function is as follows. CAHS proteins are cytosolic heat soluble proteins that seem to contribute to the anhydrobiosis in tardigrades, but their specific mechanisms are yet to be identified. It is possible that protection during anhydrobiosis might occur via the stabilization of vitrifying small molecules such as sugars, but not via the direct glass transition of CAHS proteins themselves. The polypeptide is Cytosolic-abundant heat soluble protein 1 (Ramazzottius varieornatus (Water bear)).